Reading from the N-terminus, the 283-residue chain is Apidaecins type 73 (283 aa).

A signal peptide spans 1-18 (KNFALAILVVTFVVAVFG). 9 consecutive propeptides follow at residues 19 to 41 (NTNL…EAEP), 62 to 69 (EAEPEAEP), 90 to 97 (EAELEAEP), 118 to 125 (EAEPEAEP), 146 to 153 (EAELEAEP), 174 to 181 (EAEPEAEP), 202 to 209 (EAEPEAEP), 230 to 237 (EAEPEAEP), and 258 to 265 (EAKPEAKP). The tract at residues 19–283 (NTNLDPPTRP…PQPRPPHPRI (265 aa)) is disordered. A compositionally biased stretch (pro residues) spans 273–283 (IPQPRPPHPRI).

Belongs to the apidaecin family.

It localises to the secreted. Functionally, apidaecins have bactericidal activity; predominantly against Gram-negative bacteria. They seem to interfere with cell propagation. This chain is Apidaecins type 73 (APID73), found in Apis mellifera (Honeybee).